We begin with the raw amino-acid sequence, 201 residues long: Testis-expressed protein 38 (201 aa).

The chain crosses the membrane as a helical span at residues 3–23 (ISLCIGFLGLCSVLIGSCILF).

The protein resides in the membrane. The chain is Testis-expressed protein 38 (Tex38) from Mus musculus (Mouse).